Here is a 412-residue protein sequence, read N- to C-terminus: DnaJ homolog subfamily A member 2 (412 aa).

A J domain is found at 8-70 (KLYDILGVPP…EKRELYDRYG (63 aa)). N6-acetyllysine is present on Lys-39. Phosphoserine is present on residues Ser-78 and Ser-123. A CR-type zinc finger spans residues 130-214 (GKTTKLQLSK…CEGKKVIKEV (85 aa)). Lys-134 participates in a covalent cross-link: Glycyl lysine isopeptide (Lys-Gly) (interchain with G-Cter in SUMO2). Residues Cys-143 and Cys-146 each contribute to the Zn(2+) site. Residues 143–150 (CSACSGQG) form a CXXCXGXG motif repeat. Lys-152 carries the post-translational modification N6-acetyllysine. The Zn(2+) site is built by Cys-159, Cys-162, Cys-186, Cys-189, Cys-202, and Cys-205. CXXCXGXG motif repeat units follow at residues 159–166 (CSACRGRG), 186–193 (CSDCNGEG), and 202–209 (CKKCEGKK). Residues 365-412 (IGETEEVELQEFDSTRGSGGGQRREAYNDSSDEESSSHHGPGVQCAHQ) are disordered. Tyr-391 is subject to Phosphotyrosine. A phosphoserine mark is found at Ser-394 and Ser-395. At Cys-409 the chain carries Cysteine methyl ester. A lipid anchor (S-farnesyl cysteine) is attached at Cys-409. A propeptide spans 410–412 (AHQ) (removed in mature form).

The protein resides in the membrane. Functionally, co-chaperone of Hsc70. Stimulates ATP hydrolysis and the folding of unfolded proteins mediated by HSPA1A/B (in vitro). In Homo sapiens (Human), this protein is DnaJ homolog subfamily A member 2 (DNAJA2).